The following is a 640-amino-acid chain: Chaperone protein DnaK (640 aa).

Threonine 196 carries the phosphothreonine; by autocatalysis modification. Disordered stretches follow at residues 510 to 530 (NDAK…ETKN) and 598 to 640 (AADA…DKDK).

This sequence belongs to the heat shock protein 70 family.

Acts as a chaperone. This Prosthecochloris aestuarii (strain DSM 271 / SK 413) protein is Chaperone protein DnaK.